Consider the following 80-residue polypeptide: CLAVATA3/ESR (CLE)-related protein 4 (80 aa).

The first 22 residues, 1–22, serve as a signal peptide directing secretion; it reads MASFKLWVCLILLLLEFSVHQC. A disordered region spans residues 55–80; it reads SKDGQTVLGTLDSKRLSPGGPDPRHH. A hydroxyproline mark is found at Pro72 and Pro75. An O-linked (Ara...) hydroxyproline glycan is attached at Pro75.

Belongs to the CLV3/ESR signal peptide family. In terms of processing, the O-glycosylation (arabinosylation) of the hydroxyproline Pro-75 enhances binding affinity of the CLE4p peptide for its receptor. As to expression, expressed in roots and seedlings.

It is found in the secreted. Its subcellular location is the extracellular space. Functionally, extracellular signal peptide that regulates cell fate. The chain is CLAVATA3/ESR (CLE)-related protein 4 from Arabidopsis thaliana (Mouse-ear cress).